Here is a 223-residue protein sequence, read N- to C-terminus: Ribosomal RNA small subunit methyltransferase G (223 aa).

Residues Gly-83, Leu-88, 134 to 135 (AE), and Arg-152 contribute to the S-adenosyl-L-methionine site.

The protein belongs to the methyltransferase superfamily. RNA methyltransferase RsmG family.

It is found in the cytoplasm. Specifically methylates the N7 position of guanine in position 518 of 16S rRNA. This Corynebacterium diphtheriae (strain ATCC 700971 / NCTC 13129 / Biotype gravis) protein is Ribosomal RNA small subunit methyltransferase G.